The chain runs to 377 residues: Geranylgeranyl transferase type-1 subunit beta (377 aa).

4 PFTB repeats span residues lysine 144–asparagine 186, methionine 193–glycine 234, leucine 245–lysine 284, and phenylalanine 291–glutamate 333. Geranylgeranyl diphosphate is bound by residues histidine 219 to glycine 221 and arginine 263 to lysine 266. Zn(2+)-binding residues include aspartate 269 and cysteine 271. Tyrosine 272–tryptophan 275 contacts geranylgeranyl diphosphate. Histidine 321 contributes to the Zn(2+) binding site.

The protein belongs to the protein prenyltransferase subunit beta family. As to quaternary structure, heterodimer of FNTA and PGGT1B. PGGT1B mediates interaction with substrate peptides. The cofactor is Zn(2+). Requires Mg(2+) as cofactor.

The catalysed reaction is geranylgeranyl diphosphate + L-cysteinyl-[protein] = S-geranylgeranyl-L-cysteinyl-[protein] + diphosphate. Functionally, catalyzes the transfer of a geranyl-geranyl moiety from geranyl-geranyl pyrophosphate to a cysteine at the fourth position from the C-terminus of proteins having the C-terminal sequence Cys-aliphatic-aliphatic-X. Known substrates include RAC1, RAC2, RAP1A and RAP1B. This is Geranylgeranyl transferase type-1 subunit beta (PGGT1B) from Homo sapiens (Human).